A 712-amino-acid polypeptide reads, in one-letter code: Prion-like (glutamine/asparagine-rich) domain bearing protein pqn-59 (712 aa).

Composition is skewed to basic and acidic residues over residues 79–92 (EQKGAKKEKKKPEE) and 125–141 (RESRDNNRDNRDNKEGA). Disordered stretches follow at residues 79 to 172 (EQKG…RAVA), 198 to 217 (TEVQPPVEESVTATVPTSSA), 228 to 265 (AAAHRKEALRKHQAQNPQPAAPPRRSLSPQPPLPSVAP), 410 to 517 (SRIM…QQHP), 594 to 624 (FNKFGSQSSRDQQPQQASNVGPPPGFQATNY), and 659 to 712 (AGGR…NWSN). Gly residues predominate over residues 156–165 (GRGGRGGARG). The span at 241–255 (AQNPQPAAPPRRSLS) shows a compositional bias: low complexity. Residues 431–458 (LKSTSPPLSYGQSNRGLSYDTSSASYQP) are compositionally biased toward polar residues. Residues 474–510 (PTQQSAQQHQPQQQQQQAPQQPVQQQQQTPPAQSQPT) show a composition bias toward low complexity. 2 stretches are compositionally biased toward polar residues: residues 597-612 (FGSQSSRDQQPQQASN) and 683-696 (AAQQNQHSQYQHNG).

It belongs to the Ubiquitin-associated-like family.

It localises to the cytoplasm. It is found in the stress granule. Antagonises the activities of multiple heterochronic microRNAs such as lin-4 and let-7 miRNAs. Modulates gene expression and cell fate specification during development. Plays a role in, but not strictly required for, the formation of stress granules. May be involved in protein translation and reducing the expression of mature microRNAs. This Caenorhabditis elegans protein is Prion-like (glutamine/asparagine-rich) domain bearing protein pqn-59.